The primary structure comprises 321 residues: Glycerol-3-phosphate dehydrogenase [NAD(P)+] (321 aa).

NADPH-binding residues include Ser-10, Phe-11, Arg-31, Arg-32, and Lys-104. Positions 104 and 132 each coordinate sn-glycerol 3-phosphate. Residue Ala-136 participates in NADPH binding. The sn-glycerol 3-phosphate site is built by Lys-186, Asp-238, Ser-248, Arg-249, and Asn-250. Lys-186 acts as the Proton acceptor in catalysis. Residue Arg-249 participates in NADPH binding. Glu-272 contributes to the NADPH binding site.

It belongs to the NAD-dependent glycerol-3-phosphate dehydrogenase family.

The protein resides in the cytoplasm. It carries out the reaction sn-glycerol 3-phosphate + NAD(+) = dihydroxyacetone phosphate + NADH + H(+). It catalyses the reaction sn-glycerol 3-phosphate + NADP(+) = dihydroxyacetone phosphate + NADPH + H(+). In terms of biological role, catalyzes the reduction of the glycolytic intermediate dihydroxyacetone phosphate (DHAP) to sn-glycerol 3-phosphate (G3P). This is Glycerol-3-phosphate dehydrogenase [NAD(P)+] from Methanothermobacter thermautotrophicus (strain ATCC 29096 / DSM 1053 / JCM 10044 / NBRC 100330 / Delta H) (Methanobacterium thermoautotrophicum).